The sequence spans 423 residues: MNYVTFNQDYTCLAVGTAKGFRIYHTDPFSKIFTGDNENVTIIEMLFSTSLVAIKQSPRHIVIQNTKRGTVICELTFPSAVLAVRLNRKRFAVLLEEEIYLYDIQNMGLLYTISTSANPNAICALSASSENCYLAYPLPKPREETGDKRPAHAPPLSPYVAPTSGEVLIFDAKSLKAVNVVEAHRAPLSCIALNNDGTLLATASETGTIIRVFSVPDGQKLYQFRRGTYPSTIFSLSFNMSSTLLCVSSNSDTIHIFRLGGPVTGMPESPRSPNGKDKWKRSRSFDSDNGSPPAGTSPGSEMADVPVEKSKSTGTFGSMIRRSSQMMGKSVAGVVGGYLPQAVTEMWEPARDFAFIKLPKGGMGATSRSGPLKSVVAISSSSPQVMVVTSDGGFYIYSIDMEAGGEGVLVKQYSGRRQSRAAS.

WD repeat units lie at residues 1–34, 183–223, 228–267, and 367–407; these read MNYV…KIFT, AHRA…KLYQ, TYPS…TGMP, and SRSG…GGEG. A L/FRRG motif motif is present at residues 224–228; it reads FRRGT. Residues 260–320 form a disordered region; the sequence is GGPVTGMPES…KSTGTFGSMI (61 aa).

This sequence belongs to the WD repeat PROPPIN family. Component of the PI(3,5)P2 regulatory complex.

The protein resides in the preautophagosomal structure membrane. The protein localises to the vacuole membrane. It localises to the endosome membrane. Its function is as follows. The PI(3,5)P2 regulatory complex regulates both the synthesis and turnover of phosphatidylinositol 3,5-bisphosphate (PtdIns(3,5)P2). Necessary for proper vacuole morphology. Plays an important role in osmotically-induced vacuole fragmentation. Required for cytoplasm to vacuole transport (Cvt) vesicle formation, pexophagy and starvation-induced autophagy. Involved in correct atg9 trafficking to the pre-autophagosomal structure. Might also be involved in premeiotic DNA replication. This is Autophagy-related protein 18 (atg18) from Sclerotinia sclerotiorum (strain ATCC 18683 / 1980 / Ss-1) (White mold).